The primary structure comprises 293 residues: Ribonuclease HIII (293 aa).

Positions 78-293 (LPLIGTDEVG…TEKAKKRLER (216 aa)) constitute an RNase H type-2 domain. 3 residues coordinate a divalent metal cation: Asp-84, Glu-85, and Asp-187.

This sequence belongs to the RNase HII family. RnhC subfamily. Requires Mn(2+) as cofactor. Mg(2+) serves as cofactor.

The protein localises to the cytoplasm. It carries out the reaction Endonucleolytic cleavage to 5'-phosphomonoester.. Functionally, endonuclease that specifically degrades the RNA of RNA-DNA hybrids. The chain is Ribonuclease HIII from Streptococcus pneumoniae (strain JJA).